The following is a 251-amino-acid chain: Uridylate kinase (251 aa).

24–27 (KISG) contributes to the ATP binding site. Positions 32 to 37 (GDQGFG) are involved in allosteric activation by GTP. UMP is bound at residue G66. ATP is bound by residues G67 and R71. Residues D86 and 147 to 154 (TGNPYFTT) contribute to the UMP site. The ATP site is built by N175, Y181, and D184.

It belongs to the UMP kinase family. Homohexamer.

It localises to the cytoplasm. It catalyses the reaction UMP + ATP = UDP + ADP. It participates in pyrimidine metabolism; CTP biosynthesis via de novo pathway; UDP from UMP (UMPK route): step 1/1. Its activity is regulated as follows. Allosterically activated by GTP. Inhibited by UTP. Catalyzes the reversible phosphorylation of UMP to UDP. This is Uridylate kinase from Ruegeria pomeroyi (strain ATCC 700808 / DSM 15171 / DSS-3) (Silicibacter pomeroyi).